The chain runs to 427 residues: Light-independent protochlorophyllide reductase subunit N (427 aa).

3 residues coordinate [4Fe-4S] cluster: C32, C57, and C118.

Belongs to the BchN/ChlN family. Protochlorophyllide reductase is composed of three subunits; BchL, BchN and BchB. Forms a heterotetramer of two BchB and two BchN subunits. The cofactor is [4Fe-4S] cluster.

It carries out the reaction chlorophyllide a + oxidized 2[4Fe-4S]-[ferredoxin] + 2 ADP + 2 phosphate = protochlorophyllide a + reduced 2[4Fe-4S]-[ferredoxin] + 2 ATP + 2 H2O. Its pathway is porphyrin-containing compound metabolism; bacteriochlorophyll biosynthesis (light-independent). In terms of biological role, component of the dark-operative protochlorophyllide reductase (DPOR) that uses Mg-ATP and reduced ferredoxin to reduce ring D of protochlorophyllide (Pchlide) to form chlorophyllide a (Chlide). This reaction is light-independent. The NB-protein (BchN-BchB) is the catalytic component of the complex. In Rubrivivax gelatinosus (strain NBRC 100245 / IL144), this protein is Light-independent protochlorophyllide reductase subunit N.